Reading from the N-terminus, the 100-residue chain is Small ribosomal subunit protein uS14c (100 aa).

Belongs to the universal ribosomal protein uS14 family. Part of the 30S ribosomal subunit.

The protein resides in the plastid. The protein localises to the chloroplast. Its function is as follows. Binds 16S rRNA, required for the assembly of 30S particles. This is Small ribosomal subunit protein uS14c from Physcomitrium patens (Spreading-leaved earth moss).